The sequence spans 275 residues: 2,3,4,5-tetrahydropyridine-2,6-dicarboxylate N-succinyltransferase (275 aa).

The protein belongs to the transferase hexapeptide repeat family.

Its subcellular location is the cytoplasm. It carries out the reaction (S)-2,3,4,5-tetrahydrodipicolinate + succinyl-CoA + H2O = (S)-2-succinylamino-6-oxoheptanedioate + CoA. It participates in amino-acid biosynthesis; L-lysine biosynthesis via DAP pathway; LL-2,6-diaminopimelate from (S)-tetrahydrodipicolinate (succinylase route): step 1/3. The chain is 2,3,4,5-tetrahydropyridine-2,6-dicarboxylate N-succinyltransferase from Paraburkholderia phytofirmans (strain DSM 17436 / LMG 22146 / PsJN) (Burkholderia phytofirmans).